Here is a 247-residue protein sequence, read N- to C-terminus: E3 SUMO-protein ligase NSE2 (247 aa).

M1 carries the post-translational modification N-acetylmethionine. Residues K90 and K107 each participate in a glycyl lysine isopeptide (Lys-Gly) (interchain with G-Cter in SUMO2) cross-link. S116 bears the Phosphoserine mark. Residues K125 and K130 each participate in a glycyl lysine isopeptide (Lys-Gly) (interchain with G-Cter in SUMO2) cross-link. Residues 154-240 form an SP-RING-type zinc finger; it reads MDEDMIVTQS…LRRAIESHNK (87 aa). Zn(2+) is bound by residues C185, H187, C210, and C215.

Belongs to the NSE2 family. As to quaternary structure, component of the SMC5-SMC6 complex which consists at least of SMC5, SMC6, NSMCE2, NSMCE1, NSMCE4A or EID3 and NSMCE3. Post-translationally, sumoylated, possibly via autosumoylation.

It is found in the nucleus. Its subcellular location is the chromosome. The protein localises to the telomere. It localises to the PML body. Its pathway is protein modification; protein sumoylation. E3 SUMO-protein ligase component of the SMC5-SMC6 complex, a complex involved in DNA double-strand break repair by homologous recombination. Is not be required for the stability of the complex. The complex may promote sister chromatid homologous recombination by recruiting the SMC1-SMC3 cohesin complex to double-strand breaks. Acts as an E3 ligase mediating SUMO attachment to various proteins such as SMC6L1 and TSNAX, the shelterin complex subunits TERF1, TERF2, TINF2 and TERF2IP, RAD51AP1, and maybe the cohesin components RAD21 and STAG2. Required for recruitment of telomeres to PML nuclear bodies. Required for sister chromatid cohesion during prometaphase and mitotic progression. The polypeptide is E3 SUMO-protein ligase NSE2 (Nsmce2) (Rattus norvegicus (Rat)).